The primary structure comprises 314 residues: Galectin-12 (314 aa).

Galectin domains follow at residues 27–161 (YGTT…VGFL) and 190–314 (CSRA…CVHC).

It localises to the nucleus. In terms of biological role, binds lactose. May participate in the apoptosis of adipocytes. The chain is Galectin-12 (Lgals12) from Mus musculus (Mouse).